A 398-amino-acid polypeptide reads, in one-letter code: Na(+)/H(+) antiporter NhaA (398 aa).

11 helical membrane passes run 21 to 41 (LGGY…NSPL), 66 to 86 (VLHW…GLEI), 101 to 121 (IVLP…VYLL), 132 to 152 (GWAI…ALLG), 161 to 181 (IFLT…IAVF), 184 to 204 (AELN…LCVL), 216 to 236 (LLVG…ATLA), 274 to 294 (LLIV…GMGI), 305 to 325 (IALG…WLAI), 343 to 363 (GVAL…ALAF), and 374 to 394 (IGVL…LRVL).

It belongs to the NhaA Na(+)/H(+) (TC 2.A.33) antiporter family.

It localises to the cell inner membrane. It catalyses the reaction Na(+)(in) + 2 H(+)(out) = Na(+)(out) + 2 H(+)(in). Na(+)/H(+) antiporter that extrudes sodium in exchange for external protons. This is Na(+)/H(+) antiporter NhaA from Bordetella bronchiseptica (strain ATCC BAA-588 / NCTC 13252 / RB50) (Alcaligenes bronchisepticus).